The sequence spans 375 residues: Growth/differentiation factor 8 (375 aa).

An N-terminal signal peptide occupies residues 1-18 (MQKLQISVYIYLFMLIVA). The propeptide occupies 19-266 (GPVDLNENSE…VTDTPKRSRR (248 aa)). Asparagine 47 and asparagine 71 each carry an N-linked (GlcNAc...) asparagine glycan. 4 disulfides stabilise this stretch: cysteine 272/cysteine 282, cysteine 281/cysteine 340, cysteine 309/cysteine 372, and cysteine 313/cysteine 374.

Belongs to the TGF-beta family. Homodimer; disulfide-linked. Interacts with WFIKKN2, leading to inhibit its activity. Interacts with FSTL3. Synthesized as large precursor molecule that undergoes proteolytic cleavage to generate an N-terminal propeptide and a disulfide linked C-terminal dimer, which is the biologically active molecule. The circulating form consists of a latent complex of the C-terminal dimer and other proteins, including its propeptide, which maintain the C-terminal dimer in a latent, inactive state. Ligand activation requires additional cleavage of the prodomain by a tolloid-like metalloproteinase.

It localises to the secreted. Acts specifically as a negative regulator of skeletal muscle growth. The sequence is that of Growth/differentiation factor 8 (MSTN) from Bubalus bubalis (Domestic water buffalo).